The sequence spans 243 residues: 1-(5-phosphoribosyl)-5-[(5-phosphoribosylamino)methylideneamino] imidazole-4-carboxamide isomerase (243 aa).

Catalysis depends on Asp-10, which acts as the Proton acceptor. Asp-129 (proton donor) is an active-site residue.

The protein belongs to the HisA/HisF family.

It is found in the cytoplasm. It carries out the reaction 1-(5-phospho-beta-D-ribosyl)-5-[(5-phospho-beta-D-ribosylamino)methylideneamino]imidazole-4-carboxamide = 5-[(5-phospho-1-deoxy-D-ribulos-1-ylimino)methylamino]-1-(5-phospho-beta-D-ribosyl)imidazole-4-carboxamide. It functions in the pathway amino-acid biosynthesis; L-histidine biosynthesis; L-histidine from 5-phospho-alpha-D-ribose 1-diphosphate: step 4/9. In Nocardia farcinica (strain IFM 10152), this protein is 1-(5-phosphoribosyl)-5-[(5-phosphoribosylamino)methylideneamino] imidazole-4-carboxamide isomerase.